We begin with the raw amino-acid sequence, 573 residues long: Dihydroxy-acid dehydratase (573 aa).

Positions 1–14 (MTEKSPKPHKRSDA) are enriched in basic and acidic residues. Residues 1 to 21 (MTEKSPKPHKRSDAITEGPNR) form a disordered region. Cys-55 provides a ligand contact to [2Fe-2S] cluster. Position 87 (Asp-87) interacts with Mg(2+). Residue Cys-128 participates in [2Fe-2S] cluster binding. The Mg(2+) site is built by Asp-129 and Lys-130. At Lys-130 the chain carries N6-carboxylysine. A [2Fe-2S] cluster-binding site is contributed by Cys-200. A Mg(2+)-binding site is contributed by Glu-450. Catalysis depends on Ser-476, which acts as the Proton acceptor.

Belongs to the IlvD/Edd family. Homodimer. The cofactor is [2Fe-2S] cluster. It depends on Mg(2+) as a cofactor.

It carries out the reaction (2R)-2,3-dihydroxy-3-methylbutanoate = 3-methyl-2-oxobutanoate + H2O. It catalyses the reaction (2R,3R)-2,3-dihydroxy-3-methylpentanoate = (S)-3-methyl-2-oxopentanoate + H2O. The protein operates within amino-acid biosynthesis; L-isoleucine biosynthesis; L-isoleucine from 2-oxobutanoate: step 3/4. It functions in the pathway amino-acid biosynthesis; L-valine biosynthesis; L-valine from pyruvate: step 3/4. Its function is as follows. Functions in the biosynthesis of branched-chain amino acids. Catalyzes the dehydration of (2R,3R)-2,3-dihydroxy-3-methylpentanoate (2,3-dihydroxy-3-methylvalerate) into 2-oxo-3-methylpentanoate (2-oxo-3-methylvalerate) and of (2R)-2,3-dihydroxy-3-methylbutanoate (2,3-dihydroxyisovalerate) into 2-oxo-3-methylbutanoate (2-oxoisovalerate), the penultimate precursor to L-isoleucine and L-valine, respectively. In Koribacter versatilis (strain Ellin345), this protein is Dihydroxy-acid dehydratase.